The primary structure comprises 353 residues: Probable arabinan endo-1,5-alpha-L-arabinosidase B (353 aa).

A signal peptide spans 1-16; it reads MVLVATLFSLFTVSLC. D39 acts as the Proton acceptor in catalysis. N194 is a glycosylation site (N-linked (GlcNAc...) asparagine). The disordered stretch occupies residues 202-227; sequence HLAKHPKTERVNSQDQNPDPLCRDSS. E233 serves as the catalytic Proton donor.

Belongs to the glycosyl hydrolase 43 family.

Its subcellular location is the secreted. It carries out the reaction Endohydrolysis of (1-&gt;5)-alpha-arabinofuranosidic linkages in (1-&gt;5)-arabinans.. It participates in glycan metabolism; L-arabinan degradation. Its function is as follows. Endo-1,5-alpha-L-arabinanase involved in degradation of pectin. Its preferred substrate is linear 1,5-alpha-L-arabinan. This is Probable arabinan endo-1,5-alpha-L-arabinosidase B (abnB) from Aspergillus oryzae (strain ATCC 42149 / RIB 40) (Yellow koji mold).